The primary structure comprises 534 residues: MEKSLADQISDIAIKPVNKDFDIEDEENASLFQHNEKNGESDLSDYGNSNTEETKKAHYLEVEKSKLRAEKGLELNDPKYTGVKGSRQALYEEVSENEDEEEEEEEEEEKEEDALSFRTDSEDEEVEIDEEESDADGGETEEAQQKRHALSKLIQQETKQAINKLSQSVQRDASKGYSILQQTKLFDNIIDLRIKLQKAVIAANKLPLTTESWEEAKMDDSEETKRLLKENEKLFNNLFNRLINFRIKFQLGDHITQNEEVAKHKLSKKRSLKELYQETNSLDSELKEYRTAVLNKWSTKVSSASGNAALSSNKFKAINLPADVQVENQLSDMSRLMKRTKLNRRNITPLYFQKDCANGRLPELISPVVKDSVDDNENSDDGLDIPKNYDPRRKDNNAIDITENPYVFDDEDFYRVLLNDLIDKKISNAHNSESAAITITSTNARSNNKLKKNIDTKASKGRKLNYSVQDPIANYEAPITSGYKWSDDQIDEFFAGLLGQRVNFNENEDEEQHARIENDEELEAVKNDDIQIFG.

Positions 27–148 (ENASLFQHNE…ETEEAQQKRH (122 aa)) are disordered. Residues Ser-41 and Ser-44 each carry the phosphoserine modification. A compositionally biased stretch (basic and acidic residues) spans 52–77 (EETKKAHYLEVEKSKLRAEKGLELND). Residues 86 to 161 (SRQALYEEVS…KLIQQETKQA (76 aa)) adopt a coiled-coil conformation. 2 stretches are compositionally biased toward acidic residues: residues 93–114 (EVSENEDEEEEEEEEEEKEEDA) and 121–142 (SEDEEVEIDEEESDADGGETEE). Ser-366, Ser-372, and Ser-379 each carry phosphoserine.

This sequence belongs to the AATF family.

It is found in the nucleus. It localises to the nucleolus. Functionally, involved in endoplasmic reticulum to Golgi transport. Involved in a protein-transport step blocked by brefeldin A, which disrupts the Golgi apparatus and its incoming protein flux. May also be involved for mass growth or cell proliferation. The sequence is that of Protein BFR2 (BFR2) from Saccharomyces cerevisiae (strain ATCC 204508 / S288c) (Baker's yeast).